A 430-amino-acid chain; its full sequence is Histidinol dehydrogenase (430 aa).

Tyr-124, Gln-185, and Asn-208 together coordinate NAD(+). Ser-233, Gln-255, and His-258 together coordinate substrate. Gln-255 and His-258 together coordinate Zn(2+). Residues Glu-324 and His-325 each act as proton acceptor in the active site. Residues His-325, Asp-358, Glu-412, and His-418 each coordinate substrate. Residue Asp-358 coordinates Zn(2+). Position 418 (His-418) interacts with Zn(2+).

This sequence belongs to the histidinol dehydrogenase family. Requires Zn(2+) as cofactor.

It catalyses the reaction L-histidinol + 2 NAD(+) + H2O = L-histidine + 2 NADH + 3 H(+). It participates in amino-acid biosynthesis; L-histidine biosynthesis; L-histidine from 5-phospho-alpha-D-ribose 1-diphosphate: step 9/9. Catalyzes the sequential NAD-dependent oxidations of L-histidinol to L-histidinaldehyde and then to L-histidine. This is Histidinol dehydrogenase from Leptospira biflexa serovar Patoc (strain Patoc 1 / Ames).